Consider the following 352-residue polypeptide: uncharacterized protein (352 aa).

The interval 1-40 (MTSTMKLFTDHAEISVRERPPQRNNNNQEQDNSNRPAPRR) is disordered. Over residues 8 to 21 (FTDHAEISVRERPP) the composition is skewed to basic and acidic residues. Over residues 22–36 (QRNNNNQEQDNSNRP) the composition is skewed to low complexity. A helical transmembrane segment spans residues 317-333 (MTITLPCGLTIAFFVYY).

Its subcellular location is the host cell membrane. This is an uncharacterized protein from Diadromus pulchellus idnoreovirus 1 (DpIRV-1).